The following is a 194-amino-acid chain: FMN-dependent NADH:quinone oxidoreductase (194 aa).

Residues serine 10 and 90–93 (MYNL) each bind FMN.

Belongs to the azoreductase type 1 family. Homodimer. FMN serves as cofactor.

It carries out the reaction 2 a quinone + NADH + H(+) = 2 a 1,4-benzosemiquinone + NAD(+). The enzyme catalyses N,N-dimethyl-1,4-phenylenediamine + anthranilate + 2 NAD(+) = 2-(4-dimethylaminophenyl)diazenylbenzoate + 2 NADH + 2 H(+). Its function is as follows. Quinone reductase that provides resistance to thiol-specific stress caused by electrophilic quinones. Also exhibits azoreductase activity. Catalyzes the reductive cleavage of the azo bond in aromatic azo compounds to the corresponding amines. The chain is FMN-dependent NADH:quinone oxidoreductase from Haemophilus influenzae (strain ATCC 51907 / DSM 11121 / KW20 / Rd).